A 128-amino-acid polypeptide reads, in one-letter code: Large ribosomal subunit protein bL12 (128 aa).

This sequence belongs to the bacterial ribosomal protein bL12 family. As to quaternary structure, homodimer. Part of the ribosomal stalk of the 50S ribosomal subunit. Forms a multimeric L10(L12)X complex, where L10 forms an elongated spine to which 2 to 4 L12 dimers bind in a sequential fashion. Binds GTP-bound translation factors.

Functionally, forms part of the ribosomal stalk which helps the ribosome interact with GTP-bound translation factors. Is thus essential for accurate translation. The chain is Large ribosomal subunit protein bL12 from Corynebacterium efficiens (strain DSM 44549 / YS-314 / AJ 12310 / JCM 11189 / NBRC 100395).